The chain runs to 266 residues: MKEIKVIIAGPRGRMGYEAVLLMERTAHFNLVAAIDYKHGGEKISDLPGMPALDAPIYADLHTCLDEVEADVLLDLTTPEIGKKHVTLAVERGLRSVIGTTGFTEEELKQLTENAKEKEVGTIIAPNFAIGAVLMMKFSQMAAKYFQDVEVIELHHDQKLDAPSGTAVKTVELIRQNRVPKEQGHPNETEQLEGARGANVDGIHIHSVRLPGLIAHQEVMFGGDGQMLTVRHDSFNRASFMSGVKLSIETVMNLDHLVYGLENIID.

Residue 10-15 (GPRGRM) participates in NAD(+) binding. Lys38 contributes to the NADP(+) binding site. NAD(+)-binding positions include 99 to 101 (GTT) and 125 to 128 (APNF). His155 acts as the Proton donor/acceptor in catalysis. His156 provides a ligand contact to (S)-2,3,4,5-tetrahydrodipicolinate. Catalysis depends on Lys159, which acts as the Proton donor. Residue 165–166 (GT) coordinates (S)-2,3,4,5-tetrahydrodipicolinate.

The protein belongs to the DapB family.

The protein resides in the cytoplasm. The catalysed reaction is (S)-2,3,4,5-tetrahydrodipicolinate + NAD(+) + H2O = (2S,4S)-4-hydroxy-2,3,4,5-tetrahydrodipicolinate + NADH + H(+). It carries out the reaction (S)-2,3,4,5-tetrahydrodipicolinate + NADP(+) + H2O = (2S,4S)-4-hydroxy-2,3,4,5-tetrahydrodipicolinate + NADPH + H(+). Its pathway is amino-acid biosynthesis; L-lysine biosynthesis via DAP pathway; (S)-tetrahydrodipicolinate from L-aspartate: step 4/4. Functionally, catalyzes the conversion of 4-hydroxy-tetrahydrodipicolinate (HTPA) to tetrahydrodipicolinate. This chain is 4-hydroxy-tetrahydrodipicolinate reductase, found in Bacillus mycoides (strain KBAB4) (Bacillus weihenstephanensis).